The primary structure comprises 479 residues: Anaerobic nitric oxide reductase flavorubredoxin (479 aa).

The interval 30 to 210 (LRGSSYNSYL…PFSRLVTPKI (181 aa)) is zinc metallo-hydrolase. Residues histidine 79, glutamate 81, aspartate 83, histidine 147, aspartate 166, and histidine 227 each contribute to the Fe cation site. The Flavodoxin-like domain maps to 254-393 (ITIFYDTMSN…LCREHGREIA (140 aa)). Residues 260–264 (TMSNN) and 342–369 (AFGS…EMSL) each bind FMN. The 52-residue stretch at 423–474 (GPRMQCSVCQWIYDPAKGEPMQDVAPGTPWSEVPDNFLCPECSLGKDVFDEL) folds into the Rubredoxin-like domain. 4 residues coordinate Fe cation: cysteine 428, cysteine 431, cysteine 461, and cysteine 464.

It in the N-terminal section; belongs to the zinc metallo-hydrolase group 3 family. As to quaternary structure, homotetramer. Fe cation is required as a cofactor. Requires FMN as cofactor.

It is found in the cytoplasm. The protein operates within nitrogen metabolism; nitric oxide reduction. In terms of biological role, anaerobic nitric oxide reductase; uses NADH to detoxify nitric oxide (NO), protecting several 4Fe-4S NO-sensitive enzymes. Has at least 2 reductase partners, only one of which (NorW, flavorubredoxin reductase) has been identified. NO probably binds to the di-iron center; electrons enter from the NorW at rubredoxin and are transferred sequentially to the FMN center and the di-iron center. Also able to function as an aerobic oxygen reductase. The chain is Anaerobic nitric oxide reductase flavorubredoxin from Escherichia coli O6:H1 (strain CFT073 / ATCC 700928 / UPEC).